The primary structure comprises 255 residues: uncharacterized protein (255 aa).

Positions 1–23 are cleaved as a signal peptide; the sequence is MKRLNKLVLGIIFLFLVISITAG. Cys24 carries the N-palmitoyl cysteine lipid modification. Cys24 carries S-diacylglycerol cysteine lipidation.

Belongs to the staphylococcal tandem lipoprotein family.

Its subcellular location is the cell membrane. This is an uncharacterized protein from Staphylococcus aureus (strain Mu50 / ATCC 700699).